Here is a 93-residue protein sequence, read N- to C-terminus: Defensin alpha 4 (93 aa).

An N-terminal signal peptide occupies residues 1-19 (MRTLTLLITLLLLALHTQA). Residues 20–62 (ESPQERAKAAPDQDMVMEDQDIFISFGGYKGTVLQDAVVKAGQ) constitute a propeptide that is removed on maturation. Intrachain disulfides connect C64/C92, C66/C81, and C71/C91.

This sequence belongs to the alpha-defensin family. Expressed in neutrophils (at protein level). Highest expression in bone marrow and to a much lesser extent in small intestine.

The protein resides in the secreted. Functionally, host-defense peptide that has antimicrobial activity against Gram-positive and Gram-negative bacteria and fungi (in vitro). Exhibits activity against E.coli, A.calcoaceticus, S,aureus and C.albicans. This is Defensin alpha 4 from Rattus norvegicus (Rat).